The following is a 156-amino-acid chain: Small ribosomal subunit protein uS7 (156 aa).

This sequence belongs to the universal ribosomal protein uS7 family. As to quaternary structure, part of the 30S ribosomal subunit. Contacts proteins S9 and S11.

Functionally, one of the primary rRNA binding proteins, it binds directly to 16S rRNA where it nucleates assembly of the head domain of the 30S subunit. Is located at the subunit interface close to the decoding center, probably blocks exit of the E-site tRNA. The protein is Small ribosomal subunit protein uS7 of Streptococcus uberis (strain ATCC BAA-854 / 0140J).